The primary structure comprises 497 residues: Anthranilate synthase component 1 (497 aa).

Residues Ser-49 and 271–273 (PYL) contribute to the L-tryptophan site. 312–313 (GT) contributes to the chorismate binding site. Glu-339 contacts Mg(2+). Chorismate is bound by residues Arg-447, 461–463 (GAG), and Gly-463. A Mg(2+)-binding site is contributed by Glu-476.

This sequence belongs to the anthranilate synthase component I family. As to quaternary structure, heterotetramer consisting of two non-identical subunits: a beta subunit (TrpG) and a large alpha subunit (TrpE). The cofactor is Mg(2+).

It carries out the reaction chorismate + L-glutamine = anthranilate + pyruvate + L-glutamate + H(+). Its pathway is amino-acid biosynthesis; L-tryptophan biosynthesis; L-tryptophan from chorismate: step 1/5. Its activity is regulated as follows. Feedback inhibited by tryptophan. In terms of biological role, part of a heterotetrameric complex that catalyzes the two-step biosynthesis of anthranilate, an intermediate in the biosynthesis of L-tryptophan. In the first step, the glutamine-binding beta subunit (TrpG) of anthranilate synthase (AS) provides the glutamine amidotransferase activity which generates ammonia as a substrate that, along with chorismate, is used in the second step, catalyzed by the large alpha subunit of AS (TrpE) to produce anthranilate. In the absence of TrpG, TrpE can synthesize anthranilate directly from chorismate and high concentrations of ammonia. The polypeptide is Anthranilate synthase component 1 (trpE) (Acinetobacter calcoaceticus).